Here is a 594-residue protein sequence, read N- to C-terminus: Glutamate decarboxylase 1 (594 aa).

Residues M1–S13 show a composition bias toward low complexity. Positions M1–N23 are disordered. A Phosphoserine modification is found at S78. 4-aminobutanoate is bound at residue Q190–S192. An N6-(pyridoxal phosphate)lysine modification is found at K405. R567 is a binding site for 4-aminobutanoate.

The protein belongs to the group II decarboxylase family. Homodimer. Pyridoxal 5'-phosphate serves as cofactor.

It catalyses the reaction L-glutamate + H(+) = 4-aminobutanoate + CO2. Functionally, catalyzes the synthesis of the inhibitory neurotransmitter gamma-aminobutyric acid (GABA) with pyridoxal 5'-phosphate as cofactor. This Bos taurus (Bovine) protein is Glutamate decarboxylase 1 (GAD1).